The sequence spans 338 residues: DNA fragmentation factor subunit beta (338 aa).

Positions 4-80 constitute a CIDE-N domain; the sequence is KPKSVKLRAL…LLTLGQAWQG (77 aa).

In terms of assembly, heterodimer of DFFA and DFFB. Interacts with H1-1.

It is found in the cytoplasm. Its subcellular location is the nucleus. Inhibited by DFFA (DFF45). Functionally, nuclease that induces DNA fragmentation and chromatin condensation during apoptosis. Degrades naked DNA and induces apoptotic morphology. This is DNA fragmentation factor subunit beta (DFFB) from Homo sapiens (Human).